The chain runs to 233 residues: Large ribosomal subunit protein uL1 (233 aa).

Belongs to the universal ribosomal protein uL1 family. As to quaternary structure, part of the 50S ribosomal subunit.

Functionally, binds directly to 23S rRNA. The L1 stalk is quite mobile in the ribosome, and is involved in E site tRNA release. Its function is as follows. Protein L1 is also a translational repressor protein, it controls the translation of the L11 operon by binding to its mRNA. This chain is Large ribosomal subunit protein uL1, found in Thermotoga petrophila (strain ATCC BAA-488 / DSM 13995 / JCM 10881 / RKU-1).